A 261-amino-acid chain; its full sequence is Carbonic anhydrase 1 (261 aa).

Residues 1–31 are disordered; sequence MASPDWGYDDKNGPEQWSKLYPIANGNNQSP. An N-acetylalanine modification is found at Ala2. An Alpha-carbonic anhydrase domain is found at 4–261; it reads PDWGYDDKNG…LKGRTVRASF (258 aa). His65 functions as the Proton donor/acceptor in the catalytic mechanism. Zn(2+) contacts are provided by His95, His97, and His120. Residues Thr200 and 200–201 contribute to the substrate site; that span reads TH. The interval 240 to 261 is disordered; it reads VPMQHNNRPTQPLKGRTVRASF.

The protein belongs to the alpha-carbonic anhydrase family. It depends on Zn(2+) as a cofactor.

Its subcellular location is the cytoplasm. It carries out the reaction hydrogencarbonate + H(+) = CO2 + H2O. The catalysed reaction is urea = cyanamide + H2O. With respect to regulation, inhibited by acetazolamide. In terms of biological role, catalyzes the reversible hydration of carbon dioxide. Can hydrate cyanamide to urea. The protein is Carbonic anhydrase 1 (CA1) of Gorilla gorilla gorilla (Western lowland gorilla).